The sequence spans 965 residues: Translation initiation factor IF-2 (965 aa).

The interval 94-375 is disordered; the sequence is RTFVRRDEAA…RGKHQESTTF (282 aa). Residues 104–115 show a composition bias toward low complexity; it reads EQAAEATGNGQE. Residues 121–177 are compositionally biased toward basic and acidic residues; the sequence is ELQRREEEARHEAELLEKQAQELKARQEQLAREEAERQAREQAAEAERRRAEEEAAK. Residues 181-191 are compositionally biased toward low complexity; the sequence is AAVAEAAAAAR. Positions 192–253 are enriched in basic and acidic residues; the sequence is EQAEQERASQ…KAEAEARAIR (62 aa). The segment covering 267–276 has biased composition (pro residues); it reads PEPPPKPAEA. Low complexity predominate over residues 303–320; the sequence is KKPAPAAAAQPAATTQPA. Residues 351–364 are compositionally biased toward gly residues; that stretch reads TSGGVDRGWRGGPK. Residues 465 to 634 form the tr-type G domain; that stretch reads PRPPVVTVMG…LLQAEVLELK (170 aa). Residues 474–481 form a G1 region; sequence GHVDHGKT. 474–481 provides a ligand contact to GTP; sequence GHVDHGKT. A G2 region spans residues 499–503; the sequence is GITQH. Residues 520 to 523 are G3; sequence DTPG. Residues 520-524 and 574-577 each bind GTP; these read DTPGH and NKID. The tract at residues 574 to 577 is G4; sequence NKID. Residues 610-612 form a G5 region; sequence SAK.

Belongs to the TRAFAC class translation factor GTPase superfamily. Classic translation factor GTPase family. IF-2 subfamily.

Its subcellular location is the cytoplasm. Functionally, one of the essential components for the initiation of protein synthesis. Protects formylmethionyl-tRNA from spontaneous hydrolysis and promotes its binding to the 30S ribosomal subunits. Also involved in the hydrolysis of GTP during the formation of the 70S ribosomal complex. In Paraburkholderia phymatum (strain DSM 17167 / CIP 108236 / LMG 21445 / STM815) (Burkholderia phymatum), this protein is Translation initiation factor IF-2.